A 389-amino-acid polypeptide reads, in one-letter code: S-adenosylmethionine synthase (389 aa).

Residue His-15 coordinates ATP. Asp-17 contacts Mg(2+). Glu-43 serves as a coordination point for K(+). Glu-56 and Gln-99 together coordinate L-methionine. The tract at residues 99-109 (QSPDIAQGVNE) is flexible loop. ATP-binding positions include 166-168 (DAK), 234-235 (RF), Asp-243, 249-250 (RK), Ala-266, and Lys-270. Residue Asp-243 coordinates L-methionine. An L-methionine-binding site is contributed by Lys-274.

This sequence belongs to the AdoMet synthase family. In terms of assembly, homotetramer; dimer of dimers. Mg(2+) serves as cofactor. Requires K(+) as cofactor.

The protein resides in the cytoplasm. It carries out the reaction L-methionine + ATP + H2O = S-adenosyl-L-methionine + phosphate + diphosphate. The protein operates within amino-acid biosynthesis; S-adenosyl-L-methionine biosynthesis; S-adenosyl-L-methionine from L-methionine: step 1/1. Its function is as follows. Catalyzes the formation of S-adenosylmethionine (AdoMet) from methionine and ATP. The overall synthetic reaction is composed of two sequential steps, AdoMet formation and the subsequent tripolyphosphate hydrolysis which occurs prior to release of AdoMet from the enzyme. In Chromobacterium violaceum (strain ATCC 12472 / DSM 30191 / JCM 1249 / CCUG 213 / NBRC 12614 / NCIMB 9131 / NCTC 9757 / MK), this protein is S-adenosylmethionine synthase.